A 262-amino-acid chain; its full sequence is 14-3-3 protein homolog (262 aa).

This sequence belongs to the 14-3-3 family.

The protein is 14-3-3 protein homolog of Trichoderma harzianum (Hypocrea lixii).